A 338-amino-acid polypeptide reads, in one-letter code: RNA 3'-terminal phosphate cyclase (338 aa).

Residues Gln-103 and 283–287 (YLADQ) each bind ATP. Residue His-308 is the Tele-AMP-histidine intermediate of the active site.

This sequence belongs to the RNA 3'-terminal cyclase family. Type 1 subfamily.

Its subcellular location is the cytoplasm. The catalysed reaction is a 3'-end 3'-phospho-ribonucleotide-RNA + ATP = a 3'-end 2',3'-cyclophospho-ribonucleotide-RNA + AMP + diphosphate. In terms of biological role, catalyzes the conversion of 3'-phosphate to a 2',3'-cyclic phosphodiester at the end of RNA. The mechanism of action of the enzyme occurs in 3 steps: (A) adenylation of the enzyme by ATP; (B) transfer of adenylate to an RNA-N3'P to produce RNA-N3'PP5'A; (C) and attack of the adjacent 2'-hydroxyl on the 3'-phosphorus in the diester linkage to produce the cyclic end product. The biological role of this enzyme is unknown but it is likely to function in some aspects of cellular RNA processing. In Escherichia coli O8 (strain IAI1), this protein is RNA 3'-terminal phosphate cyclase.